The chain runs to 245 residues: MRVGVLGAKGKVGATMVRAVAAADDLTLSAELDAGDPLSLLTDGNTEVVIDFTHPDVVMGNLEFLIDNGIHAVVGTTGFTAERFQQVESWLVAKPNTSVLIAPNFAIGAVLSMHFAKQAARFFDSAEVIELHHPHKADAPSGTAARTAKLIAEARKGLPPNPDATSTSLPGARGADVDGIPVHAVRLAGLVAHQEVLFGTEGEILTIRHDSLDRTSFVPGVLLAVRRIAERPGLTVGLEPLLDLH.

Residues 7 to 12 (GAKGKV), 75 to 77 (GTT), and 102 to 105 (APNF) each bind NAD(+). His132 serves as the catalytic Proton donor/acceptor. His133 is a binding site for (S)-2,3,4,5-tetrahydrodipicolinate. Lys136 (proton donor) is an active-site residue. 142-143 (GT) serves as a coordination point for (S)-2,3,4,5-tetrahydrodipicolinate.

It belongs to the DapB family.

Its subcellular location is the cytoplasm. The catalysed reaction is (S)-2,3,4,5-tetrahydrodipicolinate + NAD(+) + H2O = (2S,4S)-4-hydroxy-2,3,4,5-tetrahydrodipicolinate + NADH + H(+). The enzyme catalyses (S)-2,3,4,5-tetrahydrodipicolinate + NADP(+) + H2O = (2S,4S)-4-hydroxy-2,3,4,5-tetrahydrodipicolinate + NADPH + H(+). It functions in the pathway amino-acid biosynthesis; L-lysine biosynthesis via DAP pathway; (S)-tetrahydrodipicolinate from L-aspartate: step 4/4. Catalyzes the conversion of 4-hydroxy-tetrahydrodipicolinate (HTPA) to tetrahydrodipicolinate. The sequence is that of 4-hydroxy-tetrahydrodipicolinate reductase from Mycobacterium bovis (strain BCG / Pasteur 1173P2).